The sequence spans 267 residues: Undecaprenyl-diphosphatase (267 aa).

8 helical membrane-spanning segments follow: residues 1–21 (MSYF…FLPI), 39–59 (QGLA…VLYF), 83–103 (AKLA…GFVM), 111–131 (LRSA…LWYV), 149–169 (ALFI…RSGA), 189–209 (FLMS…KLVT), 218–238 (FLLT…HFFL), and 245–265 (GMTP…AFLL).

This sequence belongs to the UppP family.

The protein localises to the cell inner membrane. It catalyses the reaction di-trans,octa-cis-undecaprenyl diphosphate + H2O = di-trans,octa-cis-undecaprenyl phosphate + phosphate + H(+). Functionally, catalyzes the dephosphorylation of undecaprenyl diphosphate (UPP). Confers resistance to bacitracin. The protein is Undecaprenyl-diphosphatase of Vibrio cholerae serotype O1 (strain ATCC 39315 / El Tor Inaba N16961).